A 75-amino-acid polypeptide reads, in one-letter code: Small ribosomal subunit protein bS18 (75 aa).

It belongs to the bacterial ribosomal protein bS18 family. Part of the 30S ribosomal subunit. Forms a tight heterodimer with protein bS6.

Functionally, binds as a heterodimer with protein bS6 to the central domain of the 16S rRNA, where it helps stabilize the platform of the 30S subunit. The polypeptide is Small ribosomal subunit protein bS18 (Pseudoalteromonas translucida (strain TAC 125)).